The primary structure comprises 382 residues: MSAWVLPDHIADVLPSEARHIEELRRGLLDTARSYGYELVMPPLLEHLESLLTGTGEALDLQTFKLVDQLSGRSLGLRADTTQQVARIDAHLLNRQGVARLCYCGPVLHTRPDRPHATREPLQFGAEIYGHPGIEADIEAVLLSLECLRSAHAQEVSVDLADVRIVRSLLAGLPVGMHQLAQVHGALAAKDASELASLTRDFPSASREGLLALLQLYGDATVLNEAENLLKPFPGAREALSDLRAIAARMDGVRVTFDLADLRGYAYYSGARFAIYAQGASDALVRGGRYDEVGAVFGRNRPAAGFSLDVKQLVGVVSAPSLRAAIRAPWGDGGALSAAIATLRRQGETVVCVLPGHGSEVDEFHCDRELVLVDGNWVVKAI.

It belongs to the class-II aminoacyl-tRNA synthetase family. HisZ subfamily. Heteromultimer composed of HisG and HisZ subunits.

It is found in the cytoplasm. Its pathway is amino-acid biosynthesis; L-histidine biosynthesis; L-histidine from 5-phospho-alpha-D-ribose 1-diphosphate: step 1/9. In terms of biological role, required for the first step of histidine biosynthesis. May allow the feedback regulation of ATP phosphoribosyltransferase activity by histidine. The chain is ATP phosphoribosyltransferase regulatory subunit from Acidovorax ebreus (strain TPSY) (Diaphorobacter sp. (strain TPSY)).